The following is a 1060-amino-acid chain: Histone lysine demethylase PHF8 (1060 aa).

The PHD-type zinc-finger motif lies at 41-92 (PVYCLCRLPYDVTRFMIECDMCQDWFHGSCVGVEEEKAADIDLYHCPNCEVL). A Phosphoserine; by CDK1 modification is found at S69. Residues 100–120 (KRRGSSKGHDTHKGKPVKTGS) form a disordered region. The interval 101 to 115 (RRGSSKGHDTHKGKP) is linker. S120 bears the Phosphoserine; by CDK1 mark. One can recognise a JmjC domain in the interval 231-387 (FSDTRLSNLV…MQLKAYEIEK (157 aa)). T280 lines the substrate pocket. The Fe cation site is built by H283 and D285. K300 lines the substrate pocket. H355 contributes to the Fe cation binding site. Residues 508–517 (AHSTSVSMSR) are compositionally biased toward polar residues. The disordered stretch occupies residues 508-534 (AHSTSVSMSRLSLPSKNGSKKKGLKPK). S651 carries the post-translational modification Phosphoserine. Position 704 is a phosphotyrosine (Y704). Phosphothreonine is present on residues T705 and T706. S722 is modified (phosphoserine). Disordered stretches follow at residues 768–840 (QSSS…EQDS), 852–902 (YPSL…GTRV), and 915–1046 (KLAQ…KQRL). Low complexity-rich tracts occupy residues 769 to 778 (SSSSSPATSS) and 785 to 804 (GGQD…VSNS). S804, S826, S834, S854, S857, and S880 each carry phosphoserine. Over residues 826–839 (SEEEEENASLDEQD) the composition is skewed to acidic residues. Positions 891–900 (KQDRPVREGT) are enriched in basic and acidic residues. Residues 924–934 (AQKKKYIKKKP) show a composition bias toward basic residues. A compositionally biased stretch (polar residues) spans 1018 to 1030 (RRPSVGSQSNQAG).

This sequence belongs to the JHDM1 histone demethylase family. JHDM1D subfamily. In terms of assembly, interacts with POLR1B, UBTF, SETD1A, HCFC1, E2F1 and ZNF711. Interacts with ZNF263; recruited to the SIX3 promoter along with other proteins involved in chromatin modification and transcriptional corepression where it contributes to transcriptional repression. It depends on Fe(2+) as a cofactor. Phosphorylation at Ser-69 and Ser-120 are required for dissociation from chromatin and accumulation of H4K20Me1 levels during prophase.

It localises to the nucleus. The protein localises to the nucleolus. It catalyses the reaction N(6),N(6)-dimethyl-L-lysyl(36)-[histone H3] + 2 2-oxoglutarate + 2 O2 = L-lysyl(36)-[histone H3] + 2 formaldehyde + 2 succinate + 2 CO2. The enzyme catalyses N(6),N(6)-dimethyl-L-lysyl(9)-[histone H3] + 2 2-oxoglutarate + 2 O2 = L-lysyl(9)-[histone H3] + 2 formaldehyde + 2 succinate + 2 CO2. In terms of biological role, histone lysine demethylase with selectivity for the di- and monomethyl states that plays a key role cell cycle progression, rDNA transcription and brain development. Demethylates mono- and dimethylated histone H3 'Lys-9' residue (H3K9Me1 and H3K9Me2), dimethylated H3 'Lys-27' (H3K27Me2) and monomethylated histone H4 'Lys-20' residue (H4K20Me1). Acts as a transcription activator as H3K9Me1, H3K9Me2, H3K27Me2 and H4K20Me1 are epigenetic repressive marks. Involved in cell cycle progression by being required to control G1-S transition. Acts as a coactivator of rDNA transcription, by activating polymerase I (pol I) mediated transcription of rRNA genes. Required for brain development, probably by regulating expression of neuron-specific genes. Only has activity toward H4K20Me1 when nucleosome is used as a substrate and when not histone octamer is used as substrate. May also have weak activity toward dimethylated H3 'Lys-36' (H3K36Me2), however, the relevance of this result remains unsure in vivo. Specifically binds trimethylated 'Lys-4' of histone H3 (H3K4me3), affecting histone demethylase specificity: has weak activity toward H3K9Me2 in absence of H3K4me3, while it has high activity toward H3K9me2 when binding H3K4me3. Positively modulates transcription of histone demethylase KDM5C, acting synergistically with transcription factor ARX; synergy may be related to enrichment of histone H3K4me3 in regulatory elements. This Homo sapiens (Human) protein is Histone lysine demethylase PHF8 (PHF8).